A 1194-amino-acid polypeptide reads, in one-letter code: IQ motif and SEC7 domain-containing protein 3 (1194 aa).

The stretch at 20-56 forms a coiled coil; that stretch reads AIVQNQQSLIHTQRQRIDELERRLDELSAENRSLWEH. Disordered stretches follow at residues 62–149 and 229–272; these read AQPP…EKER and GRPS…QQPA. The segment covering 63–78 has biased composition (pro residues); it reads QPPPGLVPPPSAPLPA. Low complexity predominate over residues 79 to 92; the sequence is PAATAPAATAAQEP. Positions 122-133 are enriched in polar residues; sequence PSSRVQTPQSPH. S255 carries the post-translational modification Phosphoserine. The region spanning 311–340 is the IQ domain; that stretch reads SRRAACTIQTAFRQYQLSKNFEKIRNSLLE. 2 disordered regions span residues 439-471 and 515-610; these read SAGQ…QGHS and PAAV…KSAK. Composition is skewed to low complexity over residues 561-572 and 600-610; these read VAEAVVEEAVAT and SSSSASTKSAK. An SEC7 domain is found at 646 to 839; sequence TLSTDTLRKR…VGIYERIQQK (194 aa). Positions 852 to 985 constitute a PH domain; sequence TKVEKSIVGM…LKESIAEVTE (134 aa). Disordered regions lie at residues 1002–1099 and 1137–1175; these read KTLS…PTPP and SSDS…HQFC. Positions 1024–1035 are enriched in basic and acidic residues; that stretch reads AKREAMAGEKAT. Positions 1036–1052 are enriched in polar residues; the sequence is ESSGEVSIHNRLQTFQH. Composition is skewed to pro residues over residues 1064–1099 and 1159–1169; these read APSP…PTPP and PPLPPPPPPYN.

It belongs to the BRAG family. Interacts with DLG1 and DLG4. Interacts with GPHN. As to expression, expressed in brain. Localized to dendrites, as well as somas of neuronal cells.

It is found in the cytoplasm. Its subcellular location is the postsynaptic density. Its function is as follows. Acts as a guanine nucleotide exchange factor (GEF) for ARF1. This is IQ motif and SEC7 domain-containing protein 3 (Iqsec3) from Rattus norvegicus (Rat).